We begin with the raw amino-acid sequence, 153 residues long: Large ribosomal subunit protein uL30 (153 aa).

It belongs to the universal ribosomal protein uL30 family. As to quaternary structure, part of the 50S ribosomal subunit.

This chain is Large ribosomal subunit protein uL30, found in Methanosarcina acetivorans (strain ATCC 35395 / DSM 2834 / JCM 12185 / C2A).